Reading from the N-terminus, the 122-residue chain is Early nodulin-10 (122 aa).

An N-terminal signal peptide occupies residues 1–36 (MTCTLKSPPKMASFFLSSLVLMFIAALILLPQGLAA). Tandem repeats lie at residues 45-49 (PPDSE), 51-55 (PPYRN), 58-62 (PPFAL), 68-72 (APIYK), 77-81 (PPIYN), 82-86 (PPIYE), 88-92 (PPTYK), 99-103 (PPPFQ), 106-110 (PPFYK), and 113-117 (PPSQK). Positions 45–117 (PPDSELPPYR…FYKQAPPSQK (73 aa)) are 10 X 5 AA approximate repeats of P-P-X-X-X. A disordered region spans residues 90-122 (TYKPSKKRLPPPFQKLPPFYKQAPPSQKLPRVN).

In terms of tissue distribution, root nodules. In early nodules, expressed only in the interior of the developing nodule with no expression in other nodule tissues, including meristem. In slightly older nodules, expressed in almost all cells of the central zone. In more mature nodules, expression is restricted to the invasion zone.

The chain is Early nodulin-10 (ENOD10) from Medicago sativa (Alfalfa).